Here is a 149-residue protein sequence, read N- to C-terminus: 3-dehydroquinate dehydratase (149 aa).

Tyr23 acts as the Proton acceptor in catalysis. The substrate site is built by Asn74, His80, and Asp87. His100 (proton donor) is an active-site residue. Substrate contacts are provided by residues 101-102 (LS) and Arg111.

This sequence belongs to the type-II 3-dehydroquinase family. Homododecamer.

It carries out the reaction 3-dehydroquinate = 3-dehydroshikimate + H2O. It participates in metabolic intermediate biosynthesis; chorismate biosynthesis; chorismate from D-erythrose 4-phosphate and phosphoenolpyruvate: step 3/7. Functionally, catalyzes a trans-dehydration via an enolate intermediate. The sequence is that of 3-dehydroquinate dehydratase from Ruegeria pomeroyi (strain ATCC 700808 / DSM 15171 / DSS-3) (Silicibacter pomeroyi).